Reading from the N-terminus, the 343-residue chain is N-acetyl-gamma-glutamyl-phosphate reductase (343 aa).

Residue cysteine 147 is part of the active site.

The protein belongs to the NAGSA dehydrogenase family. Type 1 subfamily.

It localises to the cytoplasm. It carries out the reaction N-acetyl-L-glutamate 5-semialdehyde + phosphate + NADP(+) = N-acetyl-L-glutamyl 5-phosphate + NADPH + H(+). It functions in the pathway amino-acid biosynthesis; L-arginine biosynthesis; N(2)-acetyl-L-ornithine from L-glutamate: step 3/4. In terms of biological role, catalyzes the NADPH-dependent reduction of N-acetyl-5-glutamyl phosphate to yield N-acetyl-L-glutamate 5-semialdehyde. The polypeptide is N-acetyl-gamma-glutamyl-phosphate reductase (Staphylococcus aureus (strain MRSA252)).